A 168-amino-acid chain; its full sequence is Inorganic pyrophosphatase (168 aa).

Residues K23, R37, and Y49 each contribute to the substrate site. The Mg(2+) site is built by D59, D64, and D96. Substrate is bound at residue Y133.

It belongs to the PPase family. As to quaternary structure, homohexamer. It depends on Mg(2+) as a cofactor.

It is found in the cytoplasm. The enzyme catalyses diphosphate + H2O = 2 phosphate + H(+). Its function is as follows. Catalyzes the hydrolysis of inorganic pyrophosphate (PPi) forming two phosphate ions. This Methanosarcina acetivorans (strain ATCC 35395 / DSM 2834 / JCM 12185 / C2A) protein is Inorganic pyrophosphatase.